Reading from the N-terminus, the 202-residue chain is Dephospho-CoA kinase (202 aa).

Residues Lys-6–Leu-202 form the DPCK domain. Residue Ser-14 to Glu-19 coordinates ATP.

It belongs to the CoaE family.

The protein resides in the cytoplasm. It catalyses the reaction 3'-dephospho-CoA + ATP = ADP + CoA + H(+). It functions in the pathway cofactor biosynthesis; coenzyme A biosynthesis; CoA from (R)-pantothenate: step 5/5. In terms of biological role, catalyzes the phosphorylation of the 3'-hydroxyl group of dephosphocoenzyme A to form coenzyme A. The sequence is that of Dephospho-CoA kinase from Chlamydia caviae (strain ATCC VR-813 / DSM 19441 / 03DC25 / GPIC) (Chlamydophila caviae).